A 138-amino-acid polypeptide reads, in one-letter code: Large ribosomal subunit protein uL14 (138 aa).

The protein belongs to the universal ribosomal protein uL14 family. In terms of assembly, part of the 50S ribosomal subunit. Forms a cluster with proteins L3 and L24e, part of which may contact the 16S rRNA in 2 intersubunit bridges.

Binds to 23S rRNA. Forms part of two intersubunit bridges in the 70S ribosome. In Sulfurisphaera tokodaii (strain DSM 16993 / JCM 10545 / NBRC 100140 / 7) (Sulfolobus tokodaii), this protein is Large ribosomal subunit protein uL14.